The sequence spans 45 residues: Photosystem II reaction center protein K (45 aa).

The propeptide occupies 1-8; the sequence is MITAIIIA. Residues 23-43 form a helical membrane-spanning segment; that stretch reads ILPVIPIFFLLLAFVWQAAIG.

The protein belongs to the PsbK family. In terms of assembly, PSII is composed of 1 copy each of membrane proteins PsbA, PsbB, PsbC, PsbD, PsbE, PsbF, PsbH, PsbI, PsbJ, PsbK, PsbL, PsbM, PsbT, PsbX, PsbY, PsbZ, Psb30/Ycf12, at least 3 peripheral proteins of the oxygen-evolving complex and a large number of cofactors. It forms dimeric complexes.

The protein localises to the plastid. It is found in the chloroplast thylakoid membrane. Functionally, one of the components of the core complex of photosystem II (PSII). PSII is a light-driven water:plastoquinone oxidoreductase that uses light energy to abstract electrons from H(2)O, generating O(2) and a proton gradient subsequently used for ATP formation. It consists of a core antenna complex that captures photons, and an electron transfer chain that converts photonic excitation into a charge separation. The polypeptide is Photosystem II reaction center protein K (Gracilaria tenuistipitata var. liui (Red alga)).